The primary structure comprises 338 residues: Tetraacyldisaccharide 4'-kinase (338 aa).

51–58 contacts ATP; that stretch reads HLGGAGKT.

It belongs to the LpxK family.

It carries out the reaction a lipid A disaccharide + ATP = a lipid IVA + ADP + H(+). It functions in the pathway glycolipid biosynthesis; lipid IV(A) biosynthesis; lipid IV(A) from (3R)-3-hydroxytetradecanoyl-[acyl-carrier-protein] and UDP-N-acetyl-alpha-D-glucosamine: step 6/6. Transfers the gamma-phosphate of ATP to the 4'-position of a tetraacyldisaccharide 1-phosphate intermediate (termed DS-1-P) to form tetraacyldisaccharide 1,4'-bis-phosphate (lipid IVA). In Rhodopseudomonas palustris (strain BisB5), this protein is Tetraacyldisaccharide 4'-kinase.